The following is a 273-amino-acid chain: Probable ribosomal RNA small subunit methyltransferase A (273 aa).

S-adenosyl-L-methionine-binding residues include Asn26, Leu28, Gly53, Glu74, Asp98, and Asn113.

This sequence belongs to the class I-like SAM-binding methyltransferase superfamily. rRNA adenine N(6)-methyltransferase family. RsmA subfamily.

The protein localises to the cytoplasm. In terms of biological role, specifically dimethylates two adjacent adenosines in the loop of a conserved hairpin near the 3'-end of 16S rRNA in the 30S particle. May play a critical role in biogenesis of 30S subunits. This is Probable ribosomal RNA small subunit methyltransferase A from Methanothermobacter thermautotrophicus (strain ATCC 29096 / DSM 1053 / JCM 10044 / NBRC 100330 / Delta H) (Methanobacterium thermoautotrophicum).